The chain runs to 1698 residues: MQNGTTIGIPPENERVTERAEPVPSDLLPNNSPVNSPTIDPTLSEIKDVAADHNEEPPSKRRKVAGSTPSRRSHSRAASPPWKKAGADGPTSKIVDGKRRSTRVSNVGPVEQPPSDAKPTRSSQKQYVSKAVSSQRNAAVSSPLPMSPSRSGINRRSLAGVAVNGSPSTTAKGSIGRRRRESPSPVSKRASTRTRPDNMDAYHPSNGVTPRSNSTKTRSTRSFQLASSDFREETADDIGNDGQDEHGQRIQRLRIKVKKPALSIQHPSHVLPTRKYGSFKEWLENEGTGPGRMLTMTDALEEAQKRRQVTEAMEPGGLLSSEVCSAFLPEPQEELPQQFSHQDHLVAHALYFKKLLDKEHRAHRQAAKSLAAACAEVWRKRNKDPEDILREQQEEMRGKRKQLAKDLKKMFELARAEIDRVRLARWEEEQKAKDQRALDRAIKQSTMLFEKRRLEILGETGSDAPETTTDDEEVETDNGSENDDEEGESNMSTETEEEDGDDRDDDVGLTAEELRLKYANLPDTNPHPDQSPYSDEDSEDSDDIAADNTPGDTSGGVNRSPPPDSSGQVELDEVDPVLIDDSDESTDMDDDMGDSDDDGYSEAESDDEDGGEPGLLGFFSAKDLSLSNLHQTNSGEGDTHQTGADGDRNEDSSFDESEFGSEDPDEVTLVPTGPTNKDLSTPATVTASAELEPAAMTPSIDQTSTEEPIAIGTETPIETVAEDAAALADTEPVDVDVLDTSTNDSVPPVMSPATNLLKQIERQQHEPYHSRAASSEASPGTVATKPSEPESVSSIEAPAEKHAQPSESPGPGLKTPIPHLLRGTLREYQHFGLDWLAGLYSNHINGILADEMGLGKTIQTIALLAHLAVEHGVWGPHLVVVPTSVILNWEMEFKKWCPGFKIMTYYGNQEERRQKRRGWMDDNSWNVLITSYQLVLQDQQVLKRRSWHYMILDEAHNIKNFRSQRWQALLTFRTRARLLLTGTPLQNNLTELWSLLFFLMPTDGDEAGIEGFADLRNFSEWFRRPVEQILEHGRETMDDEAKQVVTKLHTVLRPYILRRLKADVEKQMPGKYEHVVYCRLSKRQRYLYDGFMSRAQTKETLASGNYLSIINCLMQLRKVCNHPDLFETRPISTSFAMPRSVATEFETSEALVRRRLLYQHPLEKLDLDFLNLVPISREDISRRLADDSARIMAYAPFNTLRERQYHRTNWEMKFNGSTVQSTLEALENDCRKRRMAELERSLYFESKRHGRRPVYGSSLIEFLTADSKQRPTAHGPLRKRSYADWLSSQSSVLASMMMSLEERSQAMDGYIQRFACVTPAAVAAGVTEAALTPISTRHLTNKERFPPHDPFHEAQMRLSIAFPDKRLLQYDCGKLQRLDKLLRDLKAGGHRALIFTQMTKMLDVLEQFLNIHGHRYLRLDGTTKVEQRQILTDRFNNDNRILAFILSSRSGGLGINLTGADTVIFYDLDWNPAMDKQCQDRCHRIGQTRDVHIYRFVSEYTIESNILRKANQKRMLDDVVIQEGEFTTDYFTKLDVRDMIGNDEALKDEASAAMDRVLENRVTNTSRVFEQAEDKEDIDAAKNAQKELEHADDGDFDDRANANASGVTAASASASGAGQTPTQAGTPLPDEAQQSLNANNAEVAEDTADSDPSVGHIDDYLLRFMEWNMKDEPLVLPVDKSMKKSKKGKEHRLRKRRR.

The interval 1–249 is disordered; the sequence is MQNGTTIGIP…NDGQDEHGQR (249 aa). The span at 12–21 shows a compositional bias: basic and acidic residues; it reads ENERVTERAE. A compositionally biased stretch (polar residues) spans 28-41; it reads LPNNSPVNSPTIDP. Residues 45–59 show a composition bias toward basic and acidic residues; the sequence is EIKDVAADHNEEPPS. Residues 120–140 show a composition bias toward polar residues; the sequence is TRSSQKQYVSKAVSSQRNAAV. Positions 209 to 222 are enriched in low complexity; the sequence is TPRSNSTKTRSTRS. Residues 329–403 form the HSA domain; the sequence is PEPQEELPQQ…EEMRGKRKQL (75 aa). 2 disordered regions span residues 456–682 and 763–818; these read ILGE…LSTP and QQHE…TPIP. Acidic residues-rich tracts occupy residues 468-507, 534-545, and 570-611; these read TTDD…DDDV, SDEDSEDSDDIA, and ELDE…EDGG. Residues 625–642 are compositionally biased toward polar residues; sequence SLSNLHQTNSGEGDTHQT. Acidic residues predominate over residues 652 to 666; the sequence is SSFDESEFGSEDPDE. The span at 673–682 shows a compositional bias: polar residues; the sequence is GPTNKDLSTP. Residues 837–1002 enclose the Helicase ATP-binding domain; the sequence is AGLYSNHING…WSLLFFLMPT (166 aa). 850–857 is an ATP binding site; it reads DEMGLGKT. The DEAH box signature appears at 953-956; it reads DEAH. The Helicase C-terminal domain occupies 1377-1527; that stretch reads RLDKLLRDLK…DVVIQEGEFT (151 aa). Residues 1586-1600 show a composition bias toward basic and acidic residues; that stretch reads KELEHADDGDFDDRA. Disordered stretches follow at residues 1586–1632 and 1673–1698; these read KELE…PDEA and PLVL…KRRR. Over residues 1601-1618 the composition is skewed to low complexity; that stretch reads NANASGVTAASASASGAG. Residues 1683 to 1698 are compositionally biased toward basic residues; that stretch reads KKSKKGKEHRLRKRRR.

It belongs to the SNF2/RAD54 helicase family. SWR1 subfamily. In terms of assembly, component of the SWR1 chromatin-remodeling complex.

The protein resides in the nucleus. It catalyses the reaction ATP + H2O = ADP + phosphate + H(+). In terms of biological role, catalytic component of the SWR1 complex which mediates the ATP-dependent exchange of histone H2A for the H2A variant HZT1 leading to transcriptional regulation of selected genes by chromatin remodeling. The polypeptide is Helicase swr1 (swr1) (Emericella nidulans (strain FGSC A4 / ATCC 38163 / CBS 112.46 / NRRL 194 / M139) (Aspergillus nidulans)).